A 362-amino-acid polypeptide reads, in one-letter code: Phosphoserine aminotransferase (362 aa).

Serine 9 and arginine 42 together coordinate L-glutamate. Residues 76 to 77, tryptophan 102, threonine 153, aspartate 174, and glutamine 197 each bind pyridoxal 5'-phosphate; that span reads GR. Residue lysine 198 is modified to N6-(pyridoxal phosphate)lysine. A pyridoxal 5'-phosphate-binding site is contributed by 239-240; it reads NT.

The protein belongs to the class-V pyridoxal-phosphate-dependent aminotransferase family. SerC subfamily. Homodimer. It depends on pyridoxal 5'-phosphate as a cofactor.

Its subcellular location is the cytoplasm. It catalyses the reaction O-phospho-L-serine + 2-oxoglutarate = 3-phosphooxypyruvate + L-glutamate. The catalysed reaction is 4-(phosphooxy)-L-threonine + 2-oxoglutarate = (R)-3-hydroxy-2-oxo-4-phosphooxybutanoate + L-glutamate. The protein operates within amino-acid biosynthesis; L-serine biosynthesis; L-serine from 3-phospho-D-glycerate: step 2/3. It participates in cofactor biosynthesis; pyridoxine 5'-phosphate biosynthesis; pyridoxine 5'-phosphate from D-erythrose 4-phosphate: step 3/5. In terms of biological role, catalyzes the reversible conversion of 3-phosphohydroxypyruvate to phosphoserine and of 3-hydroxy-2-oxo-4-phosphonooxybutanoate to phosphohydroxythreonine. In Enterobacter sp. (strain 638), this protein is Phosphoserine aminotransferase.